The sequence spans 352 residues: MKMRTIAKTSLALGLLTTGAITVTTQSVKAEKIQSTKVDKVPTLKAERLAMINITAGANSATTQAANTRQERTPKLEKAPNTNEEKTSASKIEKISQPKQEEQKTLNISATPAPKQEQSQTTTESTTPKTKVTTPPSTNTPQPMQSTKSDTPQSPTIKQAQTDMTPKYEDLRAYYTKPSFEFEKQFGFMLKPWTTVRFMNVIPNRFIYKIALVGKDEKKYKDGPYDNIDVFIVLEDNKYQLKKYSVGGITKTNSKKVNHKVELSITKKDNQGMISRDVSEYMITKEEISLKELDFKLRKQLIEKHNLYGNMGSGTIVIKMKNGGKYTFELHKKLQEHRMAGTNIDNIEVNIK.

Positions 1 to 30 (MKMRTIAKTSLALGLLTTGAITVTTQSVKA) are cleaved as a signal peptide. The interval 61–165 (ATTQAANTRQ…TIKQAQTDMT (105 aa)) is disordered. Residues 69 to 104 (RQERTPKLEKAPNTNEEKTSASKIEKISQPKQEEQK) show a composition bias toward basic and acidic residues. A compositionally biased stretch (low complexity) spans 114-141 (PKQEQSQTTTESTTPKTKVTTPPSTNTP). Positions 142–164 (QPMQSTKSDTPQSPTIKQAQTDM) are enriched in polar residues. Residues 228–326 (IDVFIVLEDN…VIKMKNGGKY (99 aa)) are sialyl Lewis X-binding.

The protein belongs to the staphylococcal/streptococcal toxin family. As to quaternary structure, interacts with host TLR2 (via its extracellular domain).

It is found in the secreted. In terms of biological role, secreted protein that plays an essential role in immune innate response inhibition by interacting with and inhibiting host TLR2. In turn, bacteria recognition by immune cells is impaired and cytokine production is inhibited. Mechanistically, by interacting with TLR2, blocks ligand binding and thus inhibits activation. Second, by interacting with an already formed TLR2-lipopeptide complex, prevents TLR heterodimerization and downstream signaling. The interaction with host TLR2 does not involve sialyl Lewis X interactions. The polypeptide is Staphylococcal superantigen-like 3 (Staphylococcus aureus (strain Newman)).